Here is a 575-residue protein sequence, read N- to C-terminus: Sodium/calcium exchanger NCL2 (575 aa).

3 consecutive transmembrane segments (helical) span residues 69–89, 112–132, and 146–166; these read FLPC…YGFL, IVGG…LILV, and VLIG…LLWG. Asn179 carries an N-linked (GlcNAc...) asparagine glycan. A run of 2 helical transmembrane segments spans residues 210-230 and 237-257; these read IMAI…FKLH and VLIG…YQVF. 2 EF-hand domains span residues 297-332 and 337-372; these read PNVS…INFE and NSNL…WLDE. The N-linked (GlcNAc...) asparagine glycan is linked to Asn298. 9 residues coordinate Ca(2+): Asp310, Asp312, Asp314, Lys316, Glu321, Asp350, Ser352, Asn354, and Glu361. 5 helical membrane passes run 417–437, 457–477, 494–514, 522–542, and 548–568; these read WTCI…AASA, FISF…SAII, VYGG…ALVY, FSSE…FTSF, and LWTC…VYIL.

The protein belongs to the Ca(2+):cation antiporter (CaCA) (TC 2.A.19) family.

Its subcellular location is the cell membrane. May function as a sodium/calcium exchanger (NCX) and participate in the maintenance of calcium homeostasis. May play a role abiotic stress responses. The protein is Sodium/calcium exchanger NCL2 of Oryza sativa subsp. japonica (Rice).